The chain runs to 208 residues: FMN-dependent NADH:quinone oxidoreductase (208 aa).

Residues S9, 15-17 (SAS), 96-99 (MYNF), and 140-143 (TRGG) each bind FMN.

It belongs to the azoreductase type 1 family. In terms of assembly, homodimer. FMN serves as cofactor.

The enzyme catalyses 2 a quinone + NADH + H(+) = 2 a 1,4-benzosemiquinone + NAD(+). The catalysed reaction is N,N-dimethyl-1,4-phenylenediamine + anthranilate + 2 NAD(+) = 2-(4-dimethylaminophenyl)diazenylbenzoate + 2 NADH + 2 H(+). Its function is as follows. Quinone reductase that provides resistance to thiol-specific stress caused by electrophilic quinones. Also exhibits azoreductase activity. Catalyzes the reductive cleavage of the azo bond in aromatic azo compounds to the corresponding amines. The polypeptide is FMN-dependent NADH:quinone oxidoreductase (Ralstonia nicotianae (strain ATCC BAA-1114 / GMI1000) (Ralstonia solanacearum)).